The following is a 1031-amino-acid chain: Error-prone DNA polymerase (1031 aa).

It belongs to the DNA polymerase type-C family. DnaE2 subfamily.

It localises to the cytoplasm. The catalysed reaction is DNA(n) + a 2'-deoxyribonucleoside 5'-triphosphate = DNA(n+1) + diphosphate. In terms of biological role, DNA polymerase involved in damage-induced mutagenesis and translesion synthesis (TLS). It is not the major replicative DNA polymerase. The sequence is that of Error-prone DNA polymerase from Pseudomonas syringae pv. syringae (strain B728a).